The primary structure comprises 295 residues: GTPase Era (295 aa).

Residues lysine 4–glutamate 171 enclose the Era-type G domain. The segment at glycine 12–serine 19 is G1. Glycine 12–serine 19 serves as a coordination point for GTP. The G2 stretch occupies residues glutamine 38–asparagine 42. Positions aspartate 59–glycine 62 are G3. Residues aspartate 59–isoleucine 63 and asparagine 121–aspartate 124 each bind GTP. Residues asparagine 121–aspartate 124 form a G4 region. Residues isoleucine 150 to alanine 152 form a G5 region. The KH type-2 domain maps to isoleucine 194–glutamate 280.

Belongs to the TRAFAC class TrmE-Era-EngA-EngB-Septin-like GTPase superfamily. Era GTPase family. In terms of assembly, monomer.

The protein localises to the cytoplasm. Its subcellular location is the cell membrane. Functionally, an essential GTPase that binds both GDP and GTP, with rapid nucleotide exchange. Plays a role in 16S rRNA processing and 30S ribosomal subunit biogenesis and possibly also in cell cycle regulation and energy metabolism. In Alkaliphilus oremlandii (strain OhILAs) (Clostridium oremlandii (strain OhILAs)), this protein is GTPase Era.